The primary structure comprises 101 residues: Cilia- and flagella-associated protein 141 (101 aa).

Microtubule inner protein component of sperm flagellar doublet microtubules. Expressed in airway epithelial cells.

It is found in the cytoplasm. The protein localises to the cytoskeleton. It localises to the cilium axoneme. Its subcellular location is the flagellum axoneme. Microtubule inner protein (MIP) part of the dynein-decorated doublet microtubules (DMTs) in cilia axoneme, which is required for motile cilia beating. In Homo sapiens (Human), this protein is Cilia- and flagella-associated protein 141.